A 337-amino-acid chain; its full sequence is HTH-type transcriptional regulator DegA (337 aa).

In terms of domain architecture, HTH lacI-type spans 1 to 57 (MKTTIYDVAKAAGVSITTVSRVINNTGRISDKTRQKVMNVMNEMAYTPNVHAAALTG). The segment at residues 5 to 24 (IYDVAKAAGVSITTVSRVIN) is a DNA-binding region (H-T-H motif). The segment at 300–319 (AERHRTAGRSNRGKRKAKQK) is disordered.

Functionally, involved in the control of degradation of B.subtilis amidophosphoribosyltransferase (purF). Probably activates the gene for a degradative protease. The chain is HTH-type transcriptional regulator DegA (degA) from Bacillus subtilis (strain 168).